Here is a 310-residue protein sequence, read N- to C-terminus: tRNA pseudouridine synthase B (310 aa).

Asp37 acts as the Nucleophile in catalysis.

This sequence belongs to the pseudouridine synthase TruB family. Type 1 subfamily.

It catalyses the reaction uridine(55) in tRNA = pseudouridine(55) in tRNA. Responsible for synthesis of pseudouridine from uracil-55 in the psi GC loop of transfer RNAs. This chain is tRNA pseudouridine synthase B, found in Deinococcus deserti (strain DSM 17065 / CIP 109153 / LMG 22923 / VCD115).